A 1798-amino-acid chain; its full sequence is Laminin subunit beta-2 (1798 aa).

Positions 1–32 are cleaved as a signal peptide; sequence MELTSRERGRGQPLPWELRLGLLLSVLAATLA. Residues 43-282 enclose the Laminin N-terminal domain; it reads SRGSCYPATG…ALYELVVRGN (240 aa). Asparagine 248 carries an N-linked (GlcNAc...) asparagine glycan. Cystine bridges form between cysteine 283-cysteine 292, cysteine 285-cysteine 310, cysteine 312-cysteine 321, cysteine 324-cysteine 344, cysteine 347-cysteine 356, cysteine 349-cysteine 374, cysteine 377-cysteine 386, cysteine 389-cysteine 407, cysteine 410-cysteine 423, cysteine 412-cysteine 438, cysteine 440-cysteine 449, cysteine 452-cysteine 467, cysteine 470-cysteine 484, cysteine 472-cysteine 491, cysteine 493-cysteine 502, cysteine 505-cysteine 519, cysteine 522-cysteine 534, cysteine 524-cysteine 541, and cysteine 543-cysteine 552. Laminin EGF-like domains follow at residues 283–346, 347–409, 410–469, and 470–521; these read CFCY…ACRK, CECH…VCRS, CDCD…GCRR, and CQCN…GCRP. N-linked (GlcNAc...) asparagine glycosylation is present at asparagine 368. The Laminin EGF-like 5; truncated domain occupies 522–552; sequence CDCDVGGALDPQCDEGTGQCHCRQHMVGRRC. The region spanning 561–777 is the Laminin IV type B domain; sequence RPFLDHLIWE…LLISLSTLIY (217 aa). Disulfide bonds link cysteine 783–cysteine 795, cysteine 785–cysteine 802, cysteine 804–cysteine 813, cysteine 816–cysteine 828, cysteine 831–cysteine 843, cysteine 833–cysteine 850, cysteine 852–cysteine 861, cysteine 864–cysteine 874, cysteine 877–cysteine 886, cysteine 879–cysteine 893, cysteine 896–cysteine 905, cysteine 908–cysteine 924, cysteine 927–cysteine 943, cysteine 929–cysteine 954, cysteine 956–cysteine 965, cysteine 968–cysteine 983, cysteine 986–cysteine 1000, cysteine 988–cysteine 1007, cysteine 1010–cysteine 1019, cysteine 1022–cysteine 1035, cysteine 1038–cysteine 1058, cysteine 1040–cysteine 1065, cysteine 1067–cysteine 1076, cysteine 1079–cysteine 1092, cysteine 1095–cysteine 1107, cysteine 1097–cysteine 1114, cysteine 1116–cysteine 1125, cysteine 1128–cysteine 1140, cysteine 1143–cysteine 1155, cysteine 1145–cysteine 1162, cysteine 1164–cysteine 1173, and cysteine 1176–cysteine 1187. Laminin EGF-like domains lie at 783-830, 831-876, 877-926, 927-985, 986-1037, 1038-1094, 1095-1142, and 1143-1189; these read CQCN…GCQA, CQCS…SCRP, CVCN…QCRP, CPCP…RCQL, CECS…SCHR, CTCN…GCQP, CACH…QCHA, and CDCD…ACHP. The N-linked (GlcNAc...) asparagine glycan is linked to asparagine 1085. Positions 1190-1409 are domain II; that stretch reads CHACFGDWDR…LSLTDINELV (220 aa). Residues asparagine 1249, asparagine 1308, and asparagine 1348 are each glycosylated (N-linked (GlcNAc...) asparagine). Residues 1253-1319 adopt a coiled-coil conformation; it reads ASTAQLVEAT…TLRQLDQHLD (67 aa). The tract at residues 1338–1364 is disordered; the sequence is SQSAEAERRANTSALAVPSPVSNSASA. Residues 1350-1363 show a composition bias toward low complexity; sequence SALAVPSPVSNSAS. The interval 1410–1442 is domain alpha; the sequence is CGAPGDAPCATSPCGGAGCRDEDGQPRCGGLSC. The tract at residues 1443–1798 is domain I; the sequence is NGAAATADLA…LQVQIYNTCQ (356 aa). Positions 1472 to 1526 form a coiled coil; sequence SILSRVAETRRQASEAQQRAQAALDKANASRGQVEQANQELQELIQSVKDFLNQE. An N-linked (GlcNAc...) asparagine glycan is attached at asparagine 1499. The residue at position 1532 (serine 1532) is a Phosphoserine; by FAM20C. Positions 1577–1790 form a coiled coil; that stretch reads VGDVRRAEQL…RSVLQAINLQ (214 aa).

Laminin is a complex glycoprotein, consisting of three different polypeptide chains (alpha, beta, gamma), which are bound to each other by disulfide bonds into a cross-shaped molecule comprising one long and three short arms with globules at each end. Beta-2 is a subunit of laminin-3 (laminin-121 or S-laminin), laminin-4 (laminin-221 or S-merosin), laminin-7 (laminin-321 or KS-laminin), laminin-9 (laminin-421), laminin-11 (laminin-521), laminin-14 (laminin-423) and laminin-15 (laminin-523).

The protein localises to the secreted. It localises to the extracellular space. It is found in the extracellular matrix. Its subcellular location is the basement membrane. Binding to cells via a high affinity receptor, laminin is thought to mediate the attachment, migration and organization of cells into tissues during embryonic development by interacting with other extracellular matrix components. The polypeptide is Laminin subunit beta-2 (LAMB2) (Homo sapiens (Human)).